The primary structure comprises 123 residues: WAP four-disulfide core domain protein 5 (123 aa).

An N-terminal signal peptide occupies residues 1-24 (MRTQSLLLLGALLAVGSQLPAVFG). WAP domains are found at residues 27-73 (KGEK…CVPR) and 74-121 (VSVK…RDPA). Intrachain disulfides connect cysteine 34–cysteine 62, cysteine 41–cysteine 66, cysteine 49–cysteine 61, cysteine 55–cysteine 70, cysteine 81–cysteine 109, cysteine 88–cysteine 113, cysteine 96–cysteine 108, and cysteine 102–cysteine 117.

It is found in the secreted. Functionally, putative acid-stable proteinase inhibitor. The chain is WAP four-disulfide core domain protein 5 (WFDC5) from Pan troglodytes (Chimpanzee).